Here is a 234-residue protein sequence, read N- to C-terminus: UPF0173 metal-dependent hydrolase RHE_CH01853 (234 aa).

This sequence belongs to the UPF0173 family.

The protein is UPF0173 metal-dependent hydrolase RHE_CH01853 of Rhizobium etli (strain ATCC 51251 / DSM 11541 / JCM 21823 / NBRC 15573 / CFN 42).